A 96-amino-acid polypeptide reads, in one-letter code: uncharacterized protein (96 aa).

A helical membrane pass occupies residues 53 to 71; that stretch reads VLLMPLLQSFVLSLALMGV.

The protein localises to the membrane. This is an uncharacterized protein from Saccharomyces cerevisiae (strain ATCC 204508 / S288c) (Baker's yeast).